The sequence spans 360 residues: UDP-N-acetylglucosamine--N-acetylmuramyl-(pentapeptide) pyrophosphoryl-undecaprenol N-acetylglucosamine transferase (360 aa).

Residues threonine 11–glycine 13, asparagine 117, arginine 160, serine 192, and glutamine 294 each bind UDP-N-acetyl-alpha-D-glucosamine.

This sequence belongs to the glycosyltransferase 28 family. MurG subfamily.

The protein resides in the cell inner membrane. It carries out the reaction di-trans,octa-cis-undecaprenyl diphospho-N-acetyl-alpha-D-muramoyl-L-alanyl-D-glutamyl-meso-2,6-diaminopimeloyl-D-alanyl-D-alanine + UDP-N-acetyl-alpha-D-glucosamine = di-trans,octa-cis-undecaprenyl diphospho-[N-acetyl-alpha-D-glucosaminyl-(1-&gt;4)]-N-acetyl-alpha-D-muramoyl-L-alanyl-D-glutamyl-meso-2,6-diaminopimeloyl-D-alanyl-D-alanine + UDP + H(+). The protein operates within cell wall biogenesis; peptidoglycan biosynthesis. Its function is as follows. Cell wall formation. Catalyzes the transfer of a GlcNAc subunit on undecaprenyl-pyrophosphoryl-MurNAc-pentapeptide (lipid intermediate I) to form undecaprenyl-pyrophosphoryl-MurNAc-(pentapeptide)GlcNAc (lipid intermediate II). This chain is UDP-N-acetylglucosamine--N-acetylmuramyl-(pentapeptide) pyrophosphoryl-undecaprenol N-acetylglucosamine transferase, found in Rickettsia felis (strain ATCC VR-1525 / URRWXCal2) (Rickettsia azadi).